A 377-amino-acid polypeptide reads, in one-letter code: Succinyl-diaminopimelate desuccinylase (377 aa).

Histidine 67 lines the Zn(2+) pocket. Residue aspartate 69 is part of the active site. Position 100 (aspartate 100) interacts with Zn(2+). The active-site Proton acceptor is the glutamate 134. The Zn(2+) site is built by glutamate 135, glutamate 163, and histidine 349.

This sequence belongs to the peptidase M20A family. DapE subfamily. In terms of assembly, homodimer. Requires Zn(2+) as cofactor. It depends on Co(2+) as a cofactor.

The enzyme catalyses N-succinyl-(2S,6S)-2,6-diaminopimelate + H2O = (2S,6S)-2,6-diaminopimelate + succinate. Its pathway is amino-acid biosynthesis; L-lysine biosynthesis via DAP pathway; LL-2,6-diaminopimelate from (S)-tetrahydrodipicolinate (succinylase route): step 3/3. Its function is as follows. Catalyzes the hydrolysis of N-succinyl-L,L-diaminopimelic acid (SDAP), forming succinate and LL-2,6-diaminopimelate (DAP), an intermediate involved in the bacterial biosynthesis of lysine and meso-diaminopimelic acid, an essential component of bacterial cell walls. The polypeptide is Succinyl-diaminopimelate desuccinylase (Dechloromonas aromatica (strain RCB)).